Here is a 307-residue protein sequence, read N- to C-terminus: MVSQTTSEVQPTMGVKIFSAGVAACLADIITFPLDTAKVRLQIQGEGQTSSTIRYKGVLGTITTLAKTEGLPKLYSGLPAGIQRQISFASLRIGLYDTVQEYFSSGKETPPTLVNRISAGLMTGGVAVFIGQPTEVVKVRLQAQSHLHGIKPRYTGTYNAYRIIATTESLSTLWKGTTPNLLRNVIINCTELVTYDLMKGALVNNQILADDVPCHLLSALVAGFCTTFLASPADVVKTRFINSLPGQYPSVPSCAMTMFTKEGPTAFFKGFVPSFLRLASWNVIMFVCFEQLKKELMKSRQTVDCTT.

Residues 1–10 (MVSQTTSEVQ) lie on the Mitochondrial intermembrane side of the membrane. Residues 11–32 (PTMGVKIFSAGVAACLADIITF) traverse the membrane as a helical segment. 3 Solcar repeats span residues 11–102 (PTMG…VQEY), 111–201 (PTLV…MKGA), and 210–295 (DDVP…LKKE). Residues 33–73 (PLDTAKVRLQIQGEGQTSSTIRYKGVLGTITTLAKTEGLPK) are Mitochondrial matrix-facing. K56 lines the fatty acid 16:0 pocket. The chain crosses the membrane as a helical span at residues 74–96 (LYSGLPAGIQRQISFASLRIGLY). At 97–116 (DTVQEYFSSGKETPPTLVNR) the chain is on the mitochondrial intermembrane side. Residues 117–133 (ISAGLMTGGVAVFIGQP) traverse the membrane as a helical segment. Residues 134 to 178 (TEVVKVRLQAQSHLHGIKPRYTGTYNAYRIIATTESLSTLWKGTT) are Mitochondrial matrix-facing. A helical transmembrane segment spans residues 179 to 195 (PNLLRNVIINCTELVTY). At 196–212 (DLMKGALVNNQILADDV) the chain is on the mitochondrial intermembrane side. The helical transmembrane segment at 213-232 (PCHLLSALVAGFCTTFLASP) threads the bilayer. Topologically, residues 233–266 (ADVVKTRFINSLPGQYPSVPSCAMTMFTKEGPTA) are mitochondrial matrix. C254 carries the cysteine sulfenic acid (-SOH) modification. A helical membrane pass occupies residues 267–289 (FFKGFVPSFLRLASWNVIMFVCF). A fatty acid 16:0-binding site is contributed by K269. Over 290–307 (EQLKKELMKSRQTVDCTT) the chain is Mitochondrial intermembrane.

Belongs to the mitochondrial carrier (TC 2.A.29) family. As to quaternary structure, most probably functions as a monomer. Binds one purine nucleotide per monomer. However, has also been suggested to function as a homodimer or a homotetramer. Tightly associates with cardiolipin in the mitochondrion inner membrane; may stabilize and regulate its activity. May undergo sulfenylation upon cold exposure. May increase the sensitivity of UCP1 thermogenic function to the activation by noradrenaline probably through structural effects. In terms of processing, may undergo ubiquitin-mediated proteasomal degradation. As to expression, brown adipose tissue.

The protein resides in the mitochondrion inner membrane. The catalysed reaction is H(+)(in) = H(+)(out). Its activity is regulated as follows. Has no constitutive proton transporter activity and has to be activated by long-chain fatty acids/LCFAs. Inhibited by purine nucleotides. Both purine nucleotides and LCFAs bind the cytosolic side of the transporter and directly compete to activate or inhibit it. Activated by noradrenaline and reactive oxygen species. Despite lacking canonical translational encoding for selenocysteine, a small pool of the protein has been observed to selectively incorporate selenocysteine at 'Cys-254'. Selenocysteine-modified protein is highly sensitive to redox modification and may constitute a pool of protein highly sensitive to activation by elevated levels of reactive oxygen species (ROS). Its function is as follows. Mitochondrial protein responsible for thermogenic respiration, a specialized capacity of brown adipose tissue and beige fat that participates in non-shivering adaptive thermogenesis to temperature and diet variations and more generally to the regulation of energy balance. Functions as a long-chain fatty acid/LCFA and proton symporter, simultaneously transporting one LCFA and one proton through the inner mitochondrial membrane. However, LCFAs remaining associated with the transporter via their hydrophobic tails, it results in an apparent transport of protons activated by LCFAs. Thereby, dissipates the mitochondrial proton gradient and converts the energy of substrate oxydation into heat instead of ATP. Regulates the production of reactive oxygen species/ROS by mitochondria. The chain is Mitochondrial brown fat uncoupling protein 1 from Phodopus sungorus (Striped hairy-footed hamster).